Here is a 613-residue protein sequence, read N- to C-terminus: Dihydroxy-acid dehydratase (613 aa).

Residue Asp-81 coordinates Mg(2+). Position 122 (Cys-122) interacts with [2Fe-2S] cluster. Mg(2+) is bound by residues Asp-123 and Lys-124. Lys-124 is modified (N6-carboxylysine). Position 195 (Cys-195) interacts with [2Fe-2S] cluster. Glu-491 contributes to the Mg(2+) binding site. The active-site Proton acceptor is the Ser-517.

Belongs to the IlvD/Edd family. In terms of assembly, homodimer. [2Fe-2S] cluster is required as a cofactor. It depends on Mg(2+) as a cofactor.

The catalysed reaction is (2R)-2,3-dihydroxy-3-methylbutanoate = 3-methyl-2-oxobutanoate + H2O. It catalyses the reaction (2R,3R)-2,3-dihydroxy-3-methylpentanoate = (S)-3-methyl-2-oxopentanoate + H2O. It functions in the pathway amino-acid biosynthesis; L-isoleucine biosynthesis; L-isoleucine from 2-oxobutanoate: step 3/4. Its pathway is amino-acid biosynthesis; L-valine biosynthesis; L-valine from pyruvate: step 3/4. Functions in the biosynthesis of branched-chain amino acids. Catalyzes the dehydration of (2R,3R)-2,3-dihydroxy-3-methylpentanoate (2,3-dihydroxy-3-methylvalerate) into 2-oxo-3-methylpentanoate (2-oxo-3-methylvalerate) and of (2R)-2,3-dihydroxy-3-methylbutanoate (2,3-dihydroxyisovalerate) into 2-oxo-3-methylbutanoate (2-oxoisovalerate), the penultimate precursor to L-isoleucine and L-valine, respectively. The polypeptide is Dihydroxy-acid dehydratase (Vibrio cholerae serotype O1 (strain ATCC 39541 / Classical Ogawa 395 / O395)).